The chain runs to 86 residues: Large ribosomal subunit protein uL23 (86 aa).

This sequence belongs to the universal ribosomal protein uL23 family. As to quaternary structure, part of the 50S ribosomal subunit. Contacts protein L29.

Functionally, binds to 23S rRNA. One of the proteins that surrounds the polypeptide exit tunnel on the outside of the ribosome. This Methanocaldococcus jannaschii (strain ATCC 43067 / DSM 2661 / JAL-1 / JCM 10045 / NBRC 100440) (Methanococcus jannaschii) protein is Large ribosomal subunit protein uL23.